Consider the following 255-residue polypeptide: Imidazole glycerol phosphate synthase subunit HisF (255 aa).

Active-site residues include aspartate 11 and aspartate 130.

The protein belongs to the HisA/HisF family. Heterodimer of HisH and HisF.

It is found in the cytoplasm. The catalysed reaction is 5-[(5-phospho-1-deoxy-D-ribulos-1-ylimino)methylamino]-1-(5-phospho-beta-D-ribosyl)imidazole-4-carboxamide + L-glutamine = D-erythro-1-(imidazol-4-yl)glycerol 3-phosphate + 5-amino-1-(5-phospho-beta-D-ribosyl)imidazole-4-carboxamide + L-glutamate + H(+). The protein operates within amino-acid biosynthesis; L-histidine biosynthesis; L-histidine from 5-phospho-alpha-D-ribose 1-diphosphate: step 5/9. Functionally, IGPS catalyzes the conversion of PRFAR and glutamine to IGP, AICAR and glutamate. The HisF subunit catalyzes the cyclization activity that produces IGP and AICAR from PRFAR using the ammonia provided by the HisH subunit. In Rhodopseudomonas palustris (strain ATCC BAA-98 / CGA009), this protein is Imidazole glycerol phosphate synthase subunit HisF.